We begin with the raw amino-acid sequence, 464 residues long: UDP-glycosyltransferase 76C1 (464 aa).

Residues Ser-279, Ala-338–Gln-340, His-355–Glu-363, and Lys-377–Gln-380 contribute to the UDP-alpha-D-glucose site.

The protein belongs to the UDP-glycosyltransferase family.

Inhibited by olomoucine and 3-isobutyl-1-methylxanthine. Involved in the N-glucosylation of cytokinins. Catalyzes the formation of both the 7-N and the 9-N-glucosides. The protein is UDP-glycosyltransferase 76C1 (UGT76C1) of Arabidopsis thaliana (Mouse-ear cress).